We begin with the raw amino-acid sequence, 80 residues long: Acyl carrier protein (80 aa).

Positions 4–79 (QEIFEKVKAV…DAVEYIKAKL (76 aa)) constitute a Carrier domain. Serine 39 is modified (O-(pantetheine 4'-phosphoryl)serine).

It belongs to the acyl carrier protein (ACP) family. 4'-phosphopantetheine is transferred from CoA to a specific serine of apo-ACP by AcpS. This modification is essential for activity because fatty acids are bound in thioester linkage to the sulfhydryl of the prosthetic group.

It is found in the cytoplasm. The protein operates within lipid metabolism; fatty acid biosynthesis. Its function is as follows. Carrier of the growing fatty acid chain in fatty acid biosynthesis. In Thermus thermophilus (strain ATCC BAA-163 / DSM 7039 / HB27), this protein is Acyl carrier protein.